Consider the following 309-residue polypeptide: Porphobilinogen deaminase (309 aa).

S-(dipyrrolylmethanemethyl)cysteine is present on Cys-242.

This sequence belongs to the HMBS family. Monomer. It depends on dipyrromethane as a cofactor.

It catalyses the reaction 4 porphobilinogen + H2O = hydroxymethylbilane + 4 NH4(+). It participates in porphyrin-containing compound metabolism; protoporphyrin-IX biosynthesis; coproporphyrinogen-III from 5-aminolevulinate: step 2/4. In terms of biological role, tetrapolymerization of the monopyrrole PBG into the hydroxymethylbilane pre-uroporphyrinogen in several discrete steps. This is Porphobilinogen deaminase from Pseudoalteromonas atlantica (strain T6c / ATCC BAA-1087).